Here is a 152-residue protein sequence, read N- to C-terminus: TOMM20-like protein 1 (152 aa).

Over 1–9 (MPSVRSLLR) the chain is Mitochondrial intermembrane. A helical membrane pass occupies residues 10-29 (LLAAAAACGAFAFLGYCIYL). Residues 30–152 (NRKRRGDPAF…EQDCLEDDPD (123 aa)) are Cytoplasmic-facing. The segment at 43–62 (LRDKRRAEPQKAEEQGTQLW) is disordered. Residues 47–56 (RRAEPQKAEE) show a composition bias toward basic and acidic residues.

Belongs to the Tom20 family.

The protein localises to the mitochondrion outer membrane. The sequence is that of TOMM20-like protein 1 (TOMM20L) from Homo sapiens (Human).